The following is a 617-amino-acid chain: Dihydroxy-acid dehydratase (617 aa).

Residue Asp81 coordinates Mg(2+). Cys122 is a [2Fe-2S] cluster binding site. Residues Asp123 and Lys124 each coordinate Mg(2+). Residue Lys124 is modified to N6-carboxylysine. Position 197 (Cys197) interacts with [2Fe-2S] cluster. Glu493 lines the Mg(2+) pocket. Ser519 acts as the Proton acceptor in catalysis.

Belongs to the IlvD/Edd family. Homodimer. [2Fe-2S] cluster serves as cofactor. The cofactor is Mg(2+).

It catalyses the reaction (2R)-2,3-dihydroxy-3-methylbutanoate = 3-methyl-2-oxobutanoate + H2O. It carries out the reaction (2R,3R)-2,3-dihydroxy-3-methylpentanoate = (S)-3-methyl-2-oxopentanoate + H2O. Its pathway is amino-acid biosynthesis; L-isoleucine biosynthesis; L-isoleucine from 2-oxobutanoate: step 3/4. It functions in the pathway amino-acid biosynthesis; L-valine biosynthesis; L-valine from pyruvate: step 3/4. Its function is as follows. Functions in the biosynthesis of branched-chain amino acids. Catalyzes the dehydration of (2R,3R)-2,3-dihydroxy-3-methylpentanoate (2,3-dihydroxy-3-methylvalerate) into 2-oxo-3-methylpentanoate (2-oxo-3-methylvalerate) and of (2R)-2,3-dihydroxy-3-methylbutanoate (2,3-dihydroxyisovalerate) into 2-oxo-3-methylbutanoate (2-oxoisovalerate), the penultimate precursor to L-isoleucine and L-valine, respectively. The protein is Dihydroxy-acid dehydratase of Corynebacterium aurimucosum (strain ATCC 700975 / DSM 44827 / CIP 107346 / CN-1) (Corynebacterium nigricans).